A 544-amino-acid polypeptide reads, in one-letter code: CTP synthase (544 aa).

Positions 1–267 are amidoligase domain; the sequence is MAKFVFITGG…AQRVLQILNL (267 aa). CTP is bound at residue serine 13. Serine 13 lines the UTP pocket. Position 14–19 (14–19) interacts with ATP; that stretch reads SIGKGI. Tyrosine 54 is an L-glutamine binding site. Aspartate 71 provides a ligand contact to ATP. Residues aspartate 71 and glutamate 141 each contribute to the Mg(2+) site. Residues 148 to 150, 188 to 193, and lysine 224 contribute to the CTP site; these read DIE and KTKPTQ. UTP contacts are provided by residues 188–193 and lysine 224; that span reads KTKPTQ. Positions 292–534 constitute a Glutamine amidotransferase type-1 domain; the sequence is EIAIVGKYVR…IEAALRSRSR (243 aa). Residue glycine 354 coordinates L-glutamine. Cysteine 381 (nucleophile; for glutamine hydrolysis) is an active-site residue. L-glutamine contacts are provided by residues 382-385, glutamate 405, and arginine 462; that span reads LGMQ. Residues histidine 507 and glutamate 509 contribute to the active site.

The protein belongs to the CTP synthase family. In terms of assembly, homotetramer.

It carries out the reaction UTP + L-glutamine + ATP + H2O = CTP + L-glutamate + ADP + phosphate + 2 H(+). The enzyme catalyses L-glutamine + H2O = L-glutamate + NH4(+). The catalysed reaction is UTP + NH4(+) + ATP = CTP + ADP + phosphate + 2 H(+). It participates in pyrimidine metabolism; CTP biosynthesis via de novo pathway; CTP from UDP: step 2/2. Allosterically activated by GTP, when glutamine is the substrate; GTP has no effect on the reaction when ammonia is the substrate. The allosteric effector GTP functions by stabilizing the protein conformation that binds the tetrahedral intermediate(s) formed during glutamine hydrolysis. Inhibited by the product CTP, via allosteric rather than competitive inhibition. In terms of biological role, catalyzes the ATP-dependent amination of UTP to CTP with either L-glutamine or ammonia as the source of nitrogen. Regulates intracellular CTP levels through interactions with the four ribonucleotide triphosphates. This is CTP synthase from Synechococcus sp. (strain JA-3-3Ab) (Cyanobacteria bacterium Yellowstone A-Prime).